The following is a 367-amino-acid chain: Epoxide hydrolase 3 (367 aa).

A helical transmembrane segment spans residues Ala22–Ile42. Catalysis depends on Asp180, which acts as the Nucleophile. Tyr288 (proton donor) is an active-site residue. His344 functions as the Proton acceptor in the catalytic mechanism.

It belongs to the AB hydrolase superfamily. Epoxide hydrolase family. In terms of tissue distribution, predominantly expressed in skin, esophagus, lung and tongue and to a lesser extent in pancreas and eye.

It localises to the microsome membrane. It catalyses the reaction an epoxide + H2O = an ethanediol. The catalysed reaction is 9,10-epoxyoctadecanoate + H2O = 9,10-dihydroxyoctadecanoate. It carries out the reaction 9,10-epoxy-(12Z)-octadecenoate + H2O = 9,10-dihydroxy-(12Z)-octadecenoate. The enzyme catalyses 8,9-epoxy-(5Z,11Z,14Z)-eicosatrienoate + H2O = 8,9-dihydroxy-(5Z,11Z,14Z)-eicosatrienoate. It catalyses the reaction 11,12-epoxy-(5Z,8Z,14Z)-eicosatrienoate + H2O = 11,12-dihydroxy-(5Z,8Z,14Z)-eicosatrienoate. The catalysed reaction is 14,15-epoxy-(5Z,8Z,11Z)-eicosatrienoate + H2O = 14,15-dihydroxy-(5Z,8Z,11Z)-eicosatrienoate. Inhibited by 1-(1-acetylpiperidin-4-yl)-3-(4-(trifl uoromethoxy)phenyl)urea (TPAU), 1-cyclohexyl-3-dodecylurea (CDU), 12-(3-adamantan-1-yl-ureido)-dodecanoic acid (AUDA), 1-((3S, 5S, 7S)-adamantan-1-yl)-3-(5-(2-(2-ethoxyethoxy) ethoxy)pentyl)urea (AEPU) and to a lesser extent by 8-(3-((3S, 5S, 7S)-adamantan-1-yl)ureido) octanoic acid (AUOA). In terms of biological role, catalyzes the hydrolysis of epoxide-containing fatty acids. Active in vitro against epoxyeicosatrienoic acids (EETs) including 8,9-EET, 9,10-EET, 11,12-EET and 14,15-EET and leukotoxin. The polypeptide is Epoxide hydrolase 3 (Ephx3) (Mus musculus (Mouse)).